Here is a 431-residue protein sequence, read N- to C-terminus: tRNA(Ile)-lysidine synthase (431 aa).

Serine 19 to serine 24 contributes to the ATP binding site.

Belongs to the tRNA(Ile)-lysidine synthase family.

The protein resides in the cytoplasm. The catalysed reaction is cytidine(34) in tRNA(Ile2) + L-lysine + ATP = lysidine(34) in tRNA(Ile2) + AMP + diphosphate + H(+). Its function is as follows. Ligates lysine onto the cytidine present at position 34 of the AUA codon-specific tRNA(Ile) that contains the anticodon CAU, in an ATP-dependent manner. Cytidine is converted to lysidine, thus changing the amino acid specificity of the tRNA from methionine to isoleucine. This Staphylococcus aureus (strain COL) protein is tRNA(Ile)-lysidine synthase.